Here is a 147-residue protein sequence, read N- to C-terminus: Protein SprT-like (147 aa).

The 138-residue stretch at D5 to I142 folds into the SprT-like domain. H64 is a Zn(2+) binding site. Residue E65 is part of the active site. Residue H68 participates in Zn(2+) binding.

It belongs to the SprT family. Requires Zn(2+) as cofactor.

It localises to the cytoplasm. The protein is Protein SprT-like of Streptococcus uberis (strain ATCC BAA-854 / 0140J).